Consider the following 119-residue polypeptide: Probable non-functional T cell receptor gamma variable 11 (119 aa).

A signal peptide spans 1–18; the sequence is MPLVVAVIFFSLWVFALG. The region spanning 23-119 is the Ig-like domain; sequence PEISISRPAN…VYHCACWIRH (97 aa). Asn32 carries N-linked (GlcNAc...) asparagine glycosylation.

Most probably, the gamma-delta TR is not assembled due to incorrect folding of the gamma chain. Gamma-delta TR is a heterodimer composed of a gamma and delta chain; disulfide-linked. The gamma-delta TR is associated with the transmembrane signaling CD3 coreceptor proteins following the stoichiometry: a single gamma-delta TR heterodimer associates with one CD3D-CD3E heterodimer, one CD3G-CD3E heterodimer and one CD247 homodimer forming a stable octameric structure. Upon activation, gamma-delta TR complex associates with FCER1G to initiate intracellular signaling.

Its subcellular location is the cell membrane. In terms of biological role, probable non-functional open reading frame (ORF) of V region of the variable domain of T cell receptor (TR) gamma chain. Non-functional ORF generally cannot participate in the synthesis of a productive T cell receptor (TR) chain due to altered V-(D)-J or switch recombination and/or splicing site (at mRNA level) and/or conserved amino acid change (protein level). Gamma-delta TRs recognize a variety of self and foreign non-peptide antigens frequently expressed at the epithelial boundaries between the host and external environment, including endogenous lipids presented by MH-like protein CD1D and phosphoantigens presented by butyrophilin-like molecule BTN3A1. Upon antigen recognition induces rapid, innate-like immune responses involved in pathogen clearance and tissue repair. Binding of gamma-delta TR complex to antigen triggers phosphorylation of immunoreceptor tyrosine-based activation motifs (ITAMs) in the CD3 chains by the LCK and FYN kinases, allowing the recruitment, phosphorylation, and activation of ZAP70 that facilitates phosphorylation of the scaffolding proteins LCP2 and LAT. This lead to the formation of a supramolecular signalosome that recruits the phospholipase PLCG1, resulting in calcium mobilization and ERK activation, ultimately leading to T cell expansion and differentiation into effector cells. Gamma-delta TRs are produced through somatic rearrangement of a limited repertoire of variable (V), diversity (D), and joining (J) genes. The potential diversity of gamma-delta TRs is conferred by the unique ability to rearrange (D) genes in tandem and to utilize all three reading frames. The combinatorial diversity is considerably increased by the sequence exonuclease trimming and random nucleotide (N) region additions which occur during the V-(D)-J rearrangements. This chain is Probable non-functional T cell receptor gamma variable 11, found in Homo sapiens (Human).